A 449-amino-acid polypeptide reads, in one-letter code: Adenylosuccinate synthetase isozyme 1 B (449 aa).

Residues 34-40 (GDEGKGK) and 62-64 (GHT) contribute to the GTP site. The Proton acceptor role is filled by Asp-35. Mg(2+)-binding residues include Asp-35 and Gly-62. Asp-35 is a binding site for substrate. IMP contacts are provided by residues 35-38 (DEGK), 60-63 (NAGH), Thr-155, Arg-169, Asn-248, Thr-263, and Arg-327. His-63 acts as the Proton donor in catalysis. 323–329 (VTTGRKR) is a substrate binding site. GTP contacts are provided by residues Arg-329, 355-357 (KLD), and 437-440 (GVGK).

This sequence belongs to the adenylosuccinate synthetase family. As to quaternary structure, homodimer. It depends on Mg(2+) as a cofactor.

It localises to the cytoplasm. It carries out the reaction IMP + L-aspartate + GTP = N(6)-(1,2-dicarboxyethyl)-AMP + GDP + phosphate + 2 H(+). It participates in purine metabolism; AMP biosynthesis via de novo pathway; AMP from IMP: step 1/2. In terms of biological role, component of the purine nucleotide cycle (PNC), which interconverts IMP and AMP to regulate the nucleotide levels in various tissues, and which contributes to glycolysis and ammoniagenesis. Catalyzes the first committed step in the biosynthesis of AMP from IMP. The chain is Adenylosuccinate synthetase isozyme 1 B (adss1b) from Salmo salar (Atlantic salmon).